A 603-amino-acid chain; its full sequence is NADH-ubiquinone oxidoreductase chain 5 (603 aa).

16 helical membrane-spanning segments follow: residues 4 to 24 (LPTL…LSPL), 38 to 58 (MAVS…MHSG), 87 to 107 (LIFM…SLWY), 117 to 137 (FFKY…ANNL), 140 to 160 (LFIG…WWYG), 171 to 191 (AMIY…WFLL), 211 to 233 (LPLT…HPWL), 241 to 261 (TPVS…FLLI), 273 to 293 (ILTL…ICAL), 301 to 320 (IIAF…IGIN), 331 to 351 (THAF…HSLG), 366 to 386 (LPFT…MPFL), 409 to 429 (LLIT…IIFF), 457 to 477 (LMLG…PTTV), 488 to 508 (FMAL…SSFT), and 583 to 603 (MIKL…LLII).

The protein belongs to the complex I subunit 5 family.

The protein localises to the mitochondrion inner membrane. The enzyme catalyses a ubiquinone + NADH + 5 H(+)(in) = a ubiquinol + NAD(+) + 4 H(+)(out). Functionally, core subunit of the mitochondrial membrane respiratory chain NADH dehydrogenase (Complex I) that is believed to belong to the minimal assembly required for catalysis. Complex I functions in the transfer of electrons from NADH to the respiratory chain. The immediate electron acceptor for the enzyme is believed to be ubiquinone. In Dugong dugon (Dugong), this protein is NADH-ubiquinone oxidoreductase chain 5 (MT-ND5).